Here is a 245-residue protein sequence, read N- to C-terminus: Enolase-phosphatase E1 (245 aa).

It belongs to the HAD-like hydrolase superfamily. MasA/MtnC family. In terms of assembly, monomer. It depends on Mg(2+) as a cofactor.

The catalysed reaction is 5-methylsulfanyl-2,3-dioxopentyl phosphate + H2O = 1,2-dihydroxy-5-(methylsulfanyl)pent-1-en-3-one + phosphate. It functions in the pathway amino-acid biosynthesis; L-methionine biosynthesis via salvage pathway; L-methionine from S-methyl-5-thio-alpha-D-ribose 1-phosphate: step 3/6. The protein operates within amino-acid biosynthesis; L-methionine biosynthesis via salvage pathway; L-methionine from S-methyl-5-thio-alpha-D-ribose 1-phosphate: step 4/6. Functionally, bifunctional enzyme that catalyzes the enolization of 2,3-diketo-5-methylthiopentyl-1-phosphate (DK-MTP-1-P) into the intermediate 2-hydroxy-3-keto-5-methylthiopentenyl-1-phosphate (HK-MTPenyl-1-P), which is then dephosphorylated to form the acireductone 1,2-dihydroxy-3-keto-5-methylthiopentene (DHK-MTPene). The protein is Enolase-phosphatase E1 of Synechococcus sp. (strain CC9902).